We begin with the raw amino-acid sequence, 148 residues long: Iron/alpha-ketoglutarate-dependent dioxygenase ausU (148 aa).

The Fe cation site is built by His-45 and Asp-47.

It belongs to the PhyH family. As to quaternary structure, homodimer. Fe cation is required as a cofactor.

It functions in the pathway secondary metabolite biosynthesis; terpenoid biosynthesis. Its function is as follows. Iron/alpha-ketoglutarate-dependent dioxygenase; part of the gene cluster B that mediates the biosynthesis of austinol and dehydroaustinol, two fungal meroterpenoids. The first step of the pathway is the synthesis of 3,5-dimethylorsellinic acid by the polyketide synthase ausA. 3,5-dimethylorsellinic acid is then prenylated by the polyprenyl transferase ausN. Further epoxidation by the FAD-dependent monooxygenase ausM and cyclization by the probable terpene cyclase ausL lead to the formation of protoaustinoid A. Protoaustinoid A is then oxidized to spiro-lactone preaustinoid A3 by the combined action of the FAD-binding monooxygenases ausB and ausC, and the dioxygenase ausE. Acid-catalyzed keto-rearrangement and ring contraction of the tetraketide portion of preaustinoid A3 by ausJ lead to the formation of preaustinoid A4. The aldo-keto reductase ausK, with the help of ausH, is involved in the next step by transforming preaustinoid A4 into isoaustinone which is in turn hydroxylated by the P450 monooxygenase ausI to form austinolide. Finally, the cytochrome P450 monooxygenase ausG modifies austinolide to austinol. Austinol can be further modified to dehydroaustinol which forms a diffusible complex with diorcinol that initiates conidiation. Due to genetic rearrangements of the clusters and the subsequent loss of some enzymes, the end products of the Emericella nidulans austinoid biosynthesis clusters are austinol and dehydroaustinol, even if additional enzymes, such as the O-acetyltransferase ausQ and the cytochrome P450 monooxygenase ausR are still functional. This chain is Iron/alpha-ketoglutarate-dependent dioxygenase ausU, found in Emericella nidulans (strain FGSC A4 / ATCC 38163 / CBS 112.46 / NRRL 194 / M139) (Aspergillus nidulans).